A 415-amino-acid polypeptide reads, in one-letter code: Putative serine/threonine-protein phosphatase 4 regulatory subunit 1-like (415 aa).

HEAT repeat units follow at residues 86–124 (VMEI…SNFP), 163–202 (LLPR…TEKF), 203–241 (LIPK…RRTQ), and 242–280 (LFPL…RAGL). Residues 301–318 (FASGSPAPSSGGNTSPAS) show a composition bias toward low complexity. The tract at residues 301–362 (FASGSPAPSS…GPAESPVESC (62 aa)) is disordered.

In terms of biological role, may be a regulatory subunit of serine/threonine-protein phosphatase 4. In Homo sapiens (Human), this protein is Putative serine/threonine-protein phosphatase 4 regulatory subunit 1-like (PPP4R1L).